A 349-amino-acid chain; its full sequence is Small ribosomal subunit protein uS2 (349 aa).

This sequence belongs to the universal ribosomal protein uS2 family.

This is Small ribosomal subunit protein uS2 from Methylobacterium sp. (strain 4-46).